A 351-amino-acid polypeptide reads, in one-letter code: Putative aryl-alcohol dehydrogenase C977.14c (351 aa).

Position 113 is a phosphoserine (S113).

Belongs to the aldo/keto reductase family. Aldo/keto reductase 2 subfamily.

It is found in the cytoplasm. It localises to the nucleus. This is Putative aryl-alcohol dehydrogenase C977.14c from Schizosaccharomyces pombe (strain 972 / ATCC 24843) (Fission yeast).